The following is a 661-amino-acid chain: Serine/threonine-protein phosphatase rdgC (661 aa).

Positions Arg-7–Gln-32 constitute an IQ domain. Positions Ile-105–Ser-413 are catalytic. Positions 158, 160, 187, and 219 each coordinate Mn(2+). The active-site Proton donor is the His-220. Residues His-271 and His-360 each coordinate Mn(2+). 3 consecutive EF-hand domains span residues Asp-441–Leu-476, Ala-526–His-561, and Tyr-566–His-601. The Ca(2+) site is built by Asp-539, Asp-541, Ser-543, Glu-545, Glu-550, Asp-579, Asn-581, Asp-583, Lys-585, and Glu-590. A disordered region spans residues Gln-606–Thr-625.

This sequence belongs to the PPP phosphatase family. It depends on Mn(2+) as a cofactor. As to expression, expressed in the visual system of the fly, as well as in the mushroom bodies of the central brain.

The enzyme catalyses O-phospho-L-seryl-[protein] + H2O = L-seryl-[protein] + phosphate. The catalysed reaction is O-phospho-L-threonyl-[protein] + H2O = L-threonyl-[protein] + phosphate. In terms of biological role, phosphatase required to prevent light-induced retinal degeneration. The protein is Serine/threonine-protein phosphatase rdgC (rdgC) of Drosophila melanogaster (Fruit fly).